The chain runs to 775 residues: Melanoma-associated antigen D1 (775 aa).

The interval 37-330 (SEAPPTSQAT…PARQTPSAWQ (294 aa)) is disordered. Over residues 39–50 (APPTSQATAAAS) the composition is skewed to low complexity. 7 stretches are compositionally biased toward polar residues: residues 52–63 (PNASPQSSQPPT), 84–100 (KAQNATTKGPNDYSQAR), 107–120 (KNQSKAAFKSQNGT), 149–178 (GQNSTKAGPGTTYNFPQSPSANEMTNNQPK), 221–235 (AQTSADGSQTQNVES), 247–258 (VNNLNVEENNSG), and 296–308 (LAWQNPSGWQNQT). A run of 19 repeats spans residues 292–297 (WQTPLA), 298–303 (WQNPSG), 304–309 (WQNQTA), 329–334 (WQNPVA), 335–340 (WQNPVI), 341–346 (WPNPVI), 347–352 (WQNPVI), 353–358 (WPNPIV), 359–364 (WPGPIV), 365–370 (WPNPMA), 371–376 (WQSTPG), 377–382 (WQSPPS), 383–388 (WQAPPS), 389–394 (WQSPQD), 395–400 (WQGPPD), 401–406 (WQVPPD), 407–412 (WSMPPD), 413–418 (WSFPSD), and 419–424 (WPFPPD). Residues 292–441 (WQTPLAWQNP…IPPDWQNLRP (150 aa)) form a 22 X 6 AA tandem repeats of W-[PQ]-X-P-X-X region. Low complexity predominate over residues 309-326 (ARQTPPAARQSPPARQTP). Positions 374–409 (TPGWQSPPSWQAPPSWQSPQDWQGPPDWQVPPDWSM) are disordered. Low complexity predominate over residues 375–406 (PGWQSPPSWQAPPSWQSPQDWQGPPDWQVPPD). The stretch at 425-429 (WIPAD) is one 20; approximate repeat. Tandem repeats lie at residues 430-435 (WPIPPD) and 436-441 (WQNLRP). Residues 437 to 452 (QNLRPSPNLRSSSNSR) are compositionally biased toward low complexity. A disordered region spans residues 437 to 463 (QNLRPSPNLRSSSNSRASQNQGPPQPR). The region spanning 468–666 (LQERANKLVK…RDWTAQFMEA (199 aa)) is the MAGE domain.

In terms of assembly, interacts with DLX5, DLX7 and MSX2 and forms homomultimers. Interacts with UNC5A. Interacts with TRIM28 and PJA1. Interacts with NGFR/p75NTR and RORA. In terms of tissue distribution, ubiquitously expressed in many adult tissues, except for the spleen. Expressed in osteoblastic and chondrogenic cell lines and also during embryonic development.

It is found in the nucleus. The protein localises to the cytoplasm. It localises to the cell membrane. Involved in the apoptotic response after nerve growth factor (NGF) binding in neuronal cells. Inhibits cell cycle progression, and facilitates NGFR-mediated apoptosis. May act as a regulator of the function of DLX family members. May enhance ubiquitin ligase activity of RING-type zinc finger-containing E3 ubiquitin-protein ligases. Proposed to act through recruitment and/or stabilization of the Ubl-conjugating enzyme (E2) at the E3:substrate complex. Plays a role in the circadian rhythm regulation. May act as RORA coregulator, modulating the expression of core clock genes such as BMAL1 and NFIL3, induced, or NR1D1, repressed. In Mus musculus (Mouse), this protein is Melanoma-associated antigen D1 (Maged1).